Here is a 172-residue protein sequence, read N- to C-terminus: AIG2-like protein B (172 aa).

15–20 (YGSFQE) is a binding site for substrate. Glutamate 83 (proton acceptor) is an active-site residue. Residues 146–165 (KRNPQGKGRDDFSNVLKEED) show a composition bias toward basic and acidic residues. The segment at 146–172 (KRNPQGKGRDDFSNVLKEEDPANAPSS) is disordered.

It belongs to the gamma-glutamylcyclotransferase family. As to expression, expressed in flowerss, leaves, stems, seeds and roots.

It is found in the cell membrane. Its function is as follows. Putative gamma-glutamylcyclotransferase. The protein is AIG2-like protein B of Arabidopsis thaliana (Mouse-ear cress).